The sequence spans 603 residues: Bifunctional 3-dehydroquinate dehydratase/shikimate dehydrogenase, chloroplastic (603 aa).

A compositionally biased stretch (polar residues) spans 1–10; it reads MAASSTNARL. The tract at residues 1–22 is disordered; sequence MAASSTNARLTNPPRLLSKPRL. Residues 1–66 constitute a chloroplast transit peptide; sequence MAASSTNARL…VVFSDQRRRR (66 aa). Residues 13–22 show a composition bias toward low complexity; sequence PPRLLSKPRL. The interval 96–313 is 3-dehydroquinate dehydratase; the sequence is ICAPVMADSI…QPTIKDLLDL (218 aa). Residues glutamate 124, arginine 126, and arginine 155 each coordinate 3-dehydroshikimate. Histidine 214 serves as the catalytic Proton acceptor; for 3-dehydroquinate dehydratase activity. Lysine 241, arginine 279, serine 300, and glutamine 304 together coordinate 3-dehydroshikimate. Lysine 241 serves as the catalytic Schiff-base intermediate with substrate; for 3-dehydroquinate dehydratase activity. The tract at residues 328-558 is shikimate dehydrogenase; it reads IIGKPVSHSK…VYTPRITRLL (231 aa). Residues serine 336, serine 338, threonine 381, lysine 385, asparagine 406, and aspartate 423 each coordinate shikimate. The active-site For shikimate dehydrogenase activity is the lysine 385. The For shikimate dehydrogenase activity role is filled by aspartate 423. Residues alanine 461, glycine 463, alanine 464, asparagine 483, threonine 485, arginine 488, methionine 525, and alanine 548 each coordinate NADP(+). Tyrosine 550 serves as a coordination point for shikimate. Glycine 571 is a binding site for NADP(+). Shikimate is bound by residues glutamine 578 and glutamine 582.

This sequence in the N-terminal section; belongs to the type-I 3-dehydroquinase family. The protein in the C-terminal section; belongs to the shikimate dehydrogenase family. In terms of assembly, monomer.

It is found in the plastid. Its subcellular location is the chloroplast. It catalyses the reaction 3-dehydroquinate = 3-dehydroshikimate + H2O. It carries out the reaction shikimate + NADP(+) = 3-dehydroshikimate + NADPH + H(+). It participates in metabolic intermediate biosynthesis; chorismate biosynthesis; chorismate from D-erythrose 4-phosphate and phosphoenolpyruvate: step 3/7. The protein operates within metabolic intermediate biosynthesis; chorismate biosynthesis; chorismate from D-erythrose 4-phosphate and phosphoenolpyruvate: step 4/7. Bifunctional dehydroquinate dehydratase-shikimate dehydrogenase enzyme that catalyzes two steps in the chorismate biosynthesis pathway. The sequence is that of Bifunctional 3-dehydroquinate dehydratase/shikimate dehydrogenase, chloroplastic from Arabidopsis thaliana (Mouse-ear cress).